We begin with the raw amino-acid sequence, 454 residues long: tRNA modification GTPase MnmE (454 aa).

The (6S)-5-formyl-5,6,7,8-tetrahydrofolate site is built by R23, E80, and K120. A TrmE-type G domain is found at 216-377 (GMKVVIAGRP…LRSHLKEAMG (162 aa)). N226 contacts K(+). GTP contacts are provided by residues 226–231 (NAGKSS), 245–251 (TDIAGTT), 270–273 (DTAG), and 358–360 (SAR). Position 230 (S230) interacts with Mg(2+). The K(+) site is built by T245, I247, and T250. T251 is a Mg(2+) binding site. Residue K454 participates in (6S)-5-formyl-5,6,7,8-tetrahydrofolate binding.

It belongs to the TRAFAC class TrmE-Era-EngA-EngB-Septin-like GTPase superfamily. TrmE GTPase family. Homodimer. Heterotetramer of two MnmE and two MnmG subunits. It depends on K(+) as a cofactor.

It is found in the cytoplasm. Exhibits a very high intrinsic GTPase hydrolysis rate. Involved in the addition of a carboxymethylaminomethyl (cmnm) group at the wobble position (U34) of certain tRNAs, forming tRNA-cmnm(5)s(2)U34. This Proteus mirabilis (strain HI4320) protein is tRNA modification GTPase MnmE.